A 100-amino-acid polypeptide reads, in one-letter code: Urease subunit gamma (100 aa).

It belongs to the urease gamma subunit family. In terms of assembly, heterotrimer of UreA (gamma), UreB (beta) and UreC (alpha) subunits. Three heterotrimers associate to form the active enzyme.

The protein resides in the cytoplasm. It catalyses the reaction urea + 2 H2O + H(+) = hydrogencarbonate + 2 NH4(+). It functions in the pathway nitrogen metabolism; urea degradation; CO(2) and NH(3) from urea (urease route): step 1/1. The chain is Urease subunit gamma from Vibrio parahaemolyticus.